Consider the following 215-residue polypeptide: Peroxiredoxin-5, mitochondrial (215 aa).

Residues 1–53 (MGLAGVCVLRRSAGYILGGAAGQSVAATAAARRRSEGGWASGGVRSFSRAAAA) constitute a mitochondrion transit peptide. The region spanning 57–215 (IKVGDAIPAV…SLAPSIISQL (159 aa)) is the Thioredoxin domain. An N6-acetyllysine modification is found at lysine 76. Lysine 84 is modified (N6-acetyllysine; alternate). At lysine 84 the chain carries N6-succinyllysine; alternate. The active-site Cysteine sulfenic acid (-SOH) intermediate is cysteine 101. Cysteine 101 carries S-palmitoyl cysteine lipidation. Cysteine 101 and cysteine 205 are disulfide-bonded. Position 117 is an N6-succinyllysine (lysine 117). Phosphoserine is present on residues serine 172 and serine 183. The Microbody targeting signal motif lies at 213–215 (SQL).

Belongs to the peroxiredoxin family. Prx5 subfamily. As to quaternary structure, monomer. S-palmitoylated. Palmitoylation occurs on the active site, inhibiting its reactivity; therefore PRDX5 palmitoylation status determines its antioxidant capacity. In terms of processing, S-palmitoylated. Depalmitoylated by ABHD10.

Its subcellular location is the mitochondrion. The protein localises to the cytoplasm. It localises to the peroxisome matrix. The enzyme catalyses a hydroperoxide + [thioredoxin]-dithiol = an alcohol + [thioredoxin]-disulfide + H2O. Functionally, thiol-specific peroxidase that catalyzes the reduction of hydrogen peroxide and organic hydroperoxides to water and alcohols, respectively. Plays a role in cell protection against oxidative stress by detoxifying peroxides and as sensor of hydrogen peroxide-mediated signaling events. The chain is Peroxiredoxin-5, mitochondrial (PRDX5) from Papio hamadryas (Hamadryas baboon).